A 186-amino-acid chain; its full sequence is Ribosome-recycling factor (186 aa).

The protein belongs to the RRF family.

Its subcellular location is the cytoplasm. Functionally, responsible for the release of ribosomes from messenger RNA at the termination of protein biosynthesis. May increase the efficiency of translation by recycling ribosomes from one round of translation to another. This is Ribosome-recycling factor from Brucella abortus (strain S19).